A 301-amino-acid chain; its full sequence is Cytosolic sulfotransferase 3 (301 aa).

53–58 (KAGTTW) is a 3'-phosphoadenylyl sulfate binding site. Histidine 115 functions as the Proton acceptor in the catalytic mechanism. Residues arginine 137, serine 145, tyrosine 201, 235-240 (VQFDAM), and 263-265 (RKG) contribute to the 3'-phosphoadenylyl sulfate site.

Belongs to the sulfotransferase 1 family.

The protein resides in the cytoplasm. Inhibited by Hg(2+), Co(2+), Zn(2+), Cd(2+), Cu(2+) and Pb(2+) ions. Activated slightly by Mn(2+), Ca(2+) and Mg(2+) ions. In terms of biological role, sulfotransferase that utilizes 3'-phospho-5'-adenylyl sulfate (PAPS) as sulfonate donor to catalyze the sulfate conjugation of a variety of xenobiotic and endogenous compounds, including dopamine, T3 (triiodo-L-thyronine), T4 (thyroxine), estrone, DHEA (dehydroepiandrosterone), flavonoids, isoflavonoids and other phenolic compounds. This chain is Cytosolic sulfotransferase 3, found in Danio rerio (Zebrafish).